Reading from the N-terminus, the 141-residue chain is Large ribosomal subunit protein uL16 (141 aa).

It belongs to the universal ribosomal protein uL16 family. Part of the 50S ribosomal subunit.

In terms of biological role, binds 23S rRNA and is also seen to make contacts with the A and possibly P site tRNAs. This chain is Large ribosomal subunit protein uL16, found in Sulfurimonas denitrificans (strain ATCC 33889 / DSM 1251) (Thiomicrospira denitrificans (strain ATCC 33889 / DSM 1251)).